The following is a 146-amino-acid chain: Large ribosomal subunit protein uL15 (146 aa).

Positions 1-54 (MKLHELQPAAGSRKAPKRVGRGTGSGLGRNAGKGEKGQNARSGGGVRPGFEGGQ) are disordered. Gly residues-rich tracts occupy residues 21 to 31 (RGTGSGLGRNA) and 42 to 52 (SGGGVRPGFEG).

Belongs to the universal ribosomal protein uL15 family. In terms of assembly, part of the 50S ribosomal subunit.

Binds to the 23S rRNA. In Clostridium botulinum (strain Alaska E43 / Type E3), this protein is Large ribosomal subunit protein uL15.